The sequence spans 265 residues: 14-3-3-like protein GF14-D (265 aa).

A disordered region spans residues 244–265; the sequence is DANDDGGDEIKEAAAPKEPGDQ. Residues 251-265 show a composition bias toward basic and acidic residues; it reads DEIKEAAAPKEPGDQ.

It belongs to the 14-3-3 family. As to quaternary structure, interacts with BZR1. Interacts with ABI5.

Functionally, is associated with a DNA binding complex that binds to the G box, a well-characterized cis-acting DNA regulatory element found in plant genes. The sequence is that of 14-3-3-like protein GF14-D (GF14D) from Oryza sativa subsp. japonica (Rice).